The sequence spans 330 residues: Fructose-1,6-bisphosphatase class 1 (330 aa).

Mg(2+) is bound by residues Glu78, Asp97, Leu99, and Asp100. Substrate contacts are provided by residues 100–103 (DGSS) and Asn188. Glu260 serves as a coordination point for Mg(2+).

The protein belongs to the FBPase class 1 family. Homotetramer. Mg(2+) serves as cofactor.

The protein localises to the cytoplasm. The catalysed reaction is beta-D-fructose 1,6-bisphosphate + H2O = beta-D-fructose 6-phosphate + phosphate. It functions in the pathway carbohydrate biosynthesis; gluconeogenesis. This Paracoccus denitrificans (strain Pd 1222) protein is Fructose-1,6-bisphosphatase class 1.